We begin with the raw amino-acid sequence, 685 residues long: MAAAAVAARRLSFRSGLVLLQTTRGTGVCEPKVCCRFYAGTESLPKVEGSDITGIEEIVIPKKKTWDKVAVLQALASTVNRDPTAAPYVFHDDPYLIPTSALESRSFLLAKKSGETAAKFIINSYPKYFQKDIAEPHIPCLMPEYFEPQIEDVSEAALEERIRLRKVRASVDMFDQLLQAGTTVSLETTNSLLDLLCYYGDQEPPADYPFQQTEHLENLEEAAEENNQTSKMESGPWKAQNNAERIFALMPEKNARSYCTMIRGMVKHRAYAQALNVYTELLNNRLSADVYTFNALIEAKTFILNEKFEEKWNDILDLLKHMVAQKVKPNLQTFNTILKGLRKCYSLGRIPALQILREMKHIGIEPSLATYHHIIHLFYPRDLSAIKMPSLIIYDIMNELEGRTFSPQDLDDGRFFQLAMSVCSSLRDLELAYQVHRLLNTGDNRKLVGHDPLRKVYYSKFFSLICSLEQIDVTLKWYKDLIPSVFLPHYQIFIGLLQALDVANRLELVPQIWKDSKEYSHTFRDALREEVLMLMARDKHPPELQVAFADCAADIKSTYEDQSARQPAFDWPANPLQYIAVLFLRGGRSQEAWKMLELFKKHKKIPRNELLEEFMDTAKASGSTALAIEVVKLASAFSLPIGESLAQRVVMDFTVDPEQKEALGNLTELNSSDGESSSDSDSDDK.

The N-terminal 10 residues, 1-10, are a transit peptide targeting the mitochondrion; that stretch reads MAAAAVAARR. Lys-127 carries the N6-acetyllysine modification. PPR repeat units lie at residues 150 to 184, 185 to 220, 254 to 288, 289 to 329, 330 to 366, 367 to 407, 412 to 446, 454 to 488, 489 to 523, and 572 to 606; these read IEDV…GTTV, SLET…ENLE, NARS…RLSA, DVYT…KVKP, NLQT…GIEP, SLAT…TFSP, DGRF…DNRK, RKVY…VFLP, HYQI…SHTF, and PANP…KKIP. A disordered region spans residues 663–685; the sequence is LGNLTELNSSDGESSSDSDSDDK. Over residues 676–685 the composition is skewed to acidic residues; the sequence is SSSDSDSDDK.

The protein belongs to the mitochondrion-specific ribosomal protein mS39 family. Component of the mitochondrial ribosome small subunit (28S) which comprises a 12S rRNA and about 30 distinct proteins. Associated with the 12S mitochondrial rRNA (12S mt-rRNA).

It is found in the mitochondrion. Its function is as follows. Mitochondrial RNA-binding protein that has a role in mitochondrial translation. In Mus musculus (Mouse), this protein is Small ribosomal subunit protein mS39 (Ptcd3).